Consider the following 214-residue polypeptide: Pyridoxine/pyridoxamine 5'-phosphate oxidase (214 aa).

Substrate-binding positions include 7 to 10 (REEY) and Lys65. FMN-binding positions include 60-65 (RTVLLK), 75-76 (FT), Arg81, Lys82, and Gln104. Residues Tyr122, Arg126, and Ser130 each contribute to the substrate site. FMN is bound by residues 139–140 (QS) and Trp184. 190–192 (RLH) lines the substrate pocket. Arg194 lines the FMN pocket.

It belongs to the pyridoxamine 5'-phosphate oxidase family. In terms of assembly, homodimer. Requires FMN as cofactor.

It carries out the reaction pyridoxamine 5'-phosphate + O2 + H2O = pyridoxal 5'-phosphate + H2O2 + NH4(+). The enzyme catalyses pyridoxine 5'-phosphate + O2 = pyridoxal 5'-phosphate + H2O2. It participates in cofactor metabolism; pyridoxal 5'-phosphate salvage; pyridoxal 5'-phosphate from pyridoxamine 5'-phosphate: step 1/1. Its pathway is cofactor metabolism; pyridoxal 5'-phosphate salvage; pyridoxal 5'-phosphate from pyridoxine 5'-phosphate: step 1/1. Functionally, catalyzes the oxidation of either pyridoxine 5'-phosphate (PNP) or pyridoxamine 5'-phosphate (PMP) into pyridoxal 5'-phosphate (PLP). The protein is Pyridoxine/pyridoxamine 5'-phosphate oxidase of Crocosphaera subtropica (strain ATCC 51142 / BH68) (Cyanothece sp. (strain ATCC 51142)).